The sequence spans 156 residues: C-type lectin lectoxin-Lei1 (156 aa).

The N-terminal stretch at 1-23 is a signal peptide; that stretch reads MRRFLFLSLGVLVVAFSLNGIGA. Disulfide bonds link cysteine 27–cysteine 38, cysteine 55–cysteine 154, and cysteine 129–cysteine 146. In terms of domain architecture, C-type lectin spans 34–155; sequence FDRFCYKVIK…CESRNIFICK (122 aa). N-linked (GlcNAc...) asparagine glycosylation is found at asparagine 60 and asparagine 99. Residues 119–121 carry the Sugar-binding motif; that stretch reads KRN. Position 142 (asparagine 142) interacts with Ca(2+).

The protein belongs to the true venom lectin family. In terms of tissue distribution, expressed by the venom gland.

The protein resides in the secreted. Lectin which recognizes specific carbohydrate structures and agglutinates a variety of animal cells by binding to cell-surface glycoproteins and glycolipids. May be a calcium-dependent lectin. In Leioheterodon madagascariensis (Malagasy giant hognose snake), this protein is C-type lectin lectoxin-Lei1.